The sequence spans 155 residues: Small ribosomal subunit protein uS7c (155 aa).

The protein belongs to the universal ribosomal protein uS7 family. In terms of assembly, part of the 30S ribosomal subunit.

The protein resides in the plastid. The protein localises to the chloroplast. Its function is as follows. One of the primary rRNA binding proteins, it binds directly to 16S rRNA where it nucleates assembly of the head domain of the 30S subunit. This chain is Small ribosomal subunit protein uS7c (rps7), found in Physcomitrium patens (Spreading-leaved earth moss).